The primary structure comprises 338 residues: Protein UL141 (338 aa).

The N-terminal stretch at 1–25 (MCRRESLRTLPWLFWVLLSCPRLLE) is a signal peptide. Residues 37-278 (DIAEKMWAEN…DTGMSPWATR (242 aa)) are Extracellular-facing. 3 N-linked (GlcNAc...) asparagine; by host glycosylation sites follow: N117, N132, and N147. A helical membrane pass occupies residues 279 to 299 (GIAAFLGFWSIFTVCFLCYLC). The Cytoplasmic segment spans residues 300-338 (YLQCCGHWCPTPGRGRRGGEGYRRLPTYDSYPGVKKMKR).

As to quaternary structure, interacts with human PVR. Interacts with human TNFRSF10A and TNFRSF10B. Forms a homodimer that engages two TNFRSF10B monomers.

Its subcellular location is the host endoplasmic reticulum membrane. Evasion of NK cell killing. Blocks surface expression of PVR which is a ligand for NK cell-activating receptors. Binds human PVR in the endoplasmic reticulum and prevents its maturation and transport to the cell surface. Targets also the natural killer cell activating ligand NECTIN2 for proteasome-mediated degradation. Additionally promotes intracellular retention of TNFRSF10A/TRAIL-R1 and TNFRSF10B/TRAIL-R2 and thus down-regulates their cell surface expression. This chain is Protein UL141 (UL141), found in Human cytomegalovirus (strain Merlin) (HHV-5).